The sequence spans 512 residues: Hyaluronidase PH-20 (512 aa).

The signal sequence occupies residues 1–35 (MGELRFKHLFWGSFVESGGTFQTVLIFLLIPCSLT). An N-linked (GlcNAc...) asparagine glycan is attached at Asn-46. Intrachain disulfides connect Cys-60-Cys-351 and Cys-223-Cys-237. Glu-147 functions as the Proton donor in the catalytic mechanism. Asn-165 carries N-linked (GlcNAc...) asparagine glycosylation. N-linked (GlcNAc...) asparagine glycans are attached at residues Asn-293 and Asn-368. Disulfide bonds link Cys-376-Cys-387, Cys-381-Cys-435, and Cys-437-Cys-464.

The protein belongs to the glycosyl hydrolase 56 family.

It is found in the cell membrane. The enzyme catalyses Random hydrolysis of (1-&gt;4)-linkages between N-acetyl-beta-D-glucosamine and D-glucuronate residues in hyaluronate.. Involved in sperm-egg adhesion. Upon fertilization sperm must first penetrate a layer of cumulus cells that surrounds the egg before reaching the zona pellucida. The cumulus cells are embedded in a matrix containing hyaluronic acid which is formed prior to ovulation. This protein aids in penetrating the layer of cumulus cells by digesting hyaluronic acid. This Mus musculus (Mouse) protein is Hyaluronidase PH-20 (Spam1).